We begin with the raw amino-acid sequence, 118 residues long: Large ribosomal subunit protein uL22c (118 aa).

This sequence belongs to the universal ribosomal protein uL22 family. In terms of assembly, part of the 50S ribosomal subunit.

Its subcellular location is the plastid. It is found in the chloroplast. This protein binds specifically to 23S rRNA. Functionally, the globular domain of the protein is located near the polypeptide exit tunnel on the outside of the subunit, while an extended beta-hairpin is found that lines the wall of the exit tunnel in the center of the 70S ribosome. The protein is Large ribosomal subunit protein uL22c (rpl22) of Physcomitrium patens (Spreading-leaved earth moss).